Consider the following 398-residue polypeptide: 4-hydroxy-3-methylbut-2-enyl diphosphate reductase (398 aa).

C66 is a [4Fe-4S] cluster binding site. H96 contributes to the (2E)-4-hydroxy-3-methylbut-2-enyl diphosphate binding site. H96 contacts dimethylallyl diphosphate. An isopentenyl diphosphate-binding site is contributed by H96. A [4Fe-4S] cluster-binding site is contributed by C157. H185 is a binding site for (2E)-4-hydroxy-3-methylbut-2-enyl diphosphate. H185 is a binding site for dimethylallyl diphosphate. H185 provides a ligand contact to isopentenyl diphosphate. The active-site Proton donor is E187. Residue T250 coordinates (2E)-4-hydroxy-3-methylbut-2-enyl diphosphate. C288 serves as a coordination point for [4Fe-4S] cluster. Residues S317, S318, N319, and S380 each contribute to the (2E)-4-hydroxy-3-methylbut-2-enyl diphosphate site. 4 residues coordinate dimethylallyl diphosphate: S317, S318, N319, and S380. Positions 317, 318, 319, and 380 each coordinate isopentenyl diphosphate.

The protein belongs to the IspH family. The cofactor is [4Fe-4S] cluster.

It carries out the reaction isopentenyl diphosphate + 2 oxidized [2Fe-2S]-[ferredoxin] + H2O = (2E)-4-hydroxy-3-methylbut-2-enyl diphosphate + 2 reduced [2Fe-2S]-[ferredoxin] + 2 H(+). The catalysed reaction is dimethylallyl diphosphate + 2 oxidized [2Fe-2S]-[ferredoxin] + H2O = (2E)-4-hydroxy-3-methylbut-2-enyl diphosphate + 2 reduced [2Fe-2S]-[ferredoxin] + 2 H(+). It functions in the pathway isoprenoid biosynthesis; dimethylallyl diphosphate biosynthesis; dimethylallyl diphosphate from (2E)-4-hydroxy-3-methylbutenyl diphosphate: step 1/1. Its pathway is isoprenoid biosynthesis; isopentenyl diphosphate biosynthesis via DXP pathway; isopentenyl diphosphate from 1-deoxy-D-xylulose 5-phosphate: step 6/6. Functionally, catalyzes the conversion of 1-hydroxy-2-methyl-2-(E)-butenyl 4-diphosphate (HMBPP) into a mixture of isopentenyl diphosphate (IPP) and dimethylallyl diphosphate (DMAPP). Acts in the terminal step of the DOXP/MEP pathway for isoprenoid precursor biosynthesis. This chain is 4-hydroxy-3-methylbut-2-enyl diphosphate reductase, found in Prochlorococcus marinus (strain MIT 9515).